Here is a 477-residue protein sequence, read N- to C-terminus: Exodeoxyribonuclease 7 large subunit (477 aa).

The segment at 452–477 is disordered; sequence KAAAAPKRVKKSPPPGTSGAQEDLFG.

Belongs to the XseA family. As to quaternary structure, heterooligomer composed of large and small subunits.

Its subcellular location is the cytoplasm. It catalyses the reaction Exonucleolytic cleavage in either 5'- to 3'- or 3'- to 5'-direction to yield nucleoside 5'-phosphates.. In terms of biological role, bidirectionally degrades single-stranded DNA into large acid-insoluble oligonucleotides, which are then degraded further into small acid-soluble oligonucleotides. In Erythrobacter litoralis (strain HTCC2594), this protein is Exodeoxyribonuclease 7 large subunit.